Here is a 257-residue protein sequence, read N- to C-terminus: Cytoplasmic envelopment protein 1 (257 aa).

This sequence belongs to the herpesviridae cytoplasmic envelopment protein 1 family.

It is found in the virion. The protein resides in the virion tegument. It localises to the host cytoplasm. The protein localises to the host Golgi apparatus. Functionally, plays a critical role in cytoplasmic virus egress. Participates in the final step of tegumentation and envelope acquisition within the host cytoplasm. The polypeptide is Cytoplasmic envelopment protein 1 (42) (Connochaetes taurinus (Blue wildebeest)).